The chain runs to 522 residues: 2-isopropylmalate synthase (522 aa).

One can recognise a Pyruvate carboxyltransferase domain in the interval 5-267; the sequence is VIIFDTTLRD…ETGINAKEIH (263 aa). Mn(2+) contacts are provided by Asp14, His202, His204, and Asn238. A regulatory domain region spans residues 392 to 522; the sequence is QLQQLVVQSD…MHKNRELGGV (131 aa).

Belongs to the alpha-IPM synthase/homocitrate synthase family. LeuA type 1 subfamily. As to quaternary structure, homodimer. Requires Mn(2+) as cofactor.

The protein resides in the cytoplasm. The enzyme catalyses 3-methyl-2-oxobutanoate + acetyl-CoA + H2O = (2S)-2-isopropylmalate + CoA + H(+). It participates in amino-acid biosynthesis; L-leucine biosynthesis; L-leucine from 3-methyl-2-oxobutanoate: step 1/4. Functionally, catalyzes the condensation of the acetyl group of acetyl-CoA with 3-methyl-2-oxobutanoate (2-ketoisovalerate) to form 3-carboxy-3-hydroxy-4-methylpentanoate (2-isopropylmalate). In Shewanella sp. (strain ANA-3), this protein is 2-isopropylmalate synthase.